A 555-amino-acid chain; its full sequence is Aerobic glycerol-3-phosphate dehydrogenase (555 aa).

Residue Asp24–Glu52 participates in FAD binding.

It belongs to the FAD-dependent glycerol-3-phosphate dehydrogenase family. It depends on FAD as a cofactor.

The protein localises to the cytoplasm. The catalysed reaction is a quinone + sn-glycerol 3-phosphate = dihydroxyacetone phosphate + a quinol. The protein operates within polyol metabolism; glycerol degradation via glycerol kinase pathway; glycerone phosphate from sn-glycerol 3-phosphate (aerobic route): step 1/1. This is Aerobic glycerol-3-phosphate dehydrogenase (glpD) from Bacillus subtilis (strain 168).